We begin with the raw amino-acid sequence, 228 residues long: Uracil-DNA glycosylase (228 aa).

Catalysis depends on Asp-64, which acts as the Proton acceptor.

Belongs to the uracil-DNA glycosylase (UDG) superfamily. UNG family.

It is found in the cytoplasm. The enzyme catalyses Hydrolyzes single-stranded DNA or mismatched double-stranded DNA and polynucleotides, releasing free uracil.. Functionally, excises uracil residues from the DNA which can arise as a result of misincorporation of dUMP residues by DNA polymerase or due to deamination of cytosine. The chain is Uracil-DNA glycosylase from Yersinia pseudotuberculosis serotype IB (strain PB1/+).